A 153-amino-acid chain; its full sequence is MDIGEILNLLPHRYPFLLVDRVVEIIPGQKLTAYKNVTINEPFFNGHFPGHPVMPGVLILEALAQATAILAYKSENMDPSRKLTYLMGVDGARFRKPVLPGDRLQLEIEVVRHKGAVWKTKGLATVDGARVAEGEFLATVVDKDADAAESAAS.

The active site involves H47.

This sequence belongs to the thioester dehydratase family. FabZ subfamily.

It localises to the cytoplasm. It carries out the reaction a (3R)-hydroxyacyl-[ACP] = a (2E)-enoyl-[ACP] + H2O. Its function is as follows. Involved in unsaturated fatty acids biosynthesis. Catalyzes the dehydration of short chain beta-hydroxyacyl-ACPs and long chain saturated and unsaturated beta-hydroxyacyl-ACPs. The polypeptide is 3-hydroxyacyl-[acyl-carrier-protein] dehydratase FabZ (Myxococcus xanthus (strain DK1622)).